The sequence spans 321 residues: NADH-quinone oxidoreductase subunit H (321 aa).

Transmembrane regions (helical) follow at residues 9–29 (LLAI…GAYM), 78–98 (IIFT…FAIM), 111–131 (IGIL…LLGG), 156–176 (FLGL…ISTI), 183–203 (IWNI…GLAI), 234–254 (FFIG…TLFF), 262–282 (LPPY…FILI), and 296–316 (ILGW…TAIV).

Belongs to the complex I subunit 1 family. In terms of assembly, NDH-1 is composed of 14 different subunits. Subunits NuoA, H, J, K, L, M, N constitute the membrane sector of the complex.

It localises to the cell membrane. It catalyses the reaction a quinone + NADH + 5 H(+)(in) = a quinol + NAD(+) + 4 H(+)(out). NDH-1 shuttles electrons from NADH, via FMN and iron-sulfur (Fe-S) centers, to quinones in the respiratory chain. The immediate electron acceptor for the enzyme in this species is believed to be ubiquinone. Couples the redox reaction to proton translocation (for every two electrons transferred, four hydrogen ions are translocated across the cytoplasmic membrane), and thus conserves the redox energy in a proton gradient. This subunit may bind ubiquinone. In Baumannia cicadellinicola subsp. Homalodisca coagulata, this protein is NADH-quinone oxidoreductase subunit H.